Here is a 359-residue protein sequence, read N- to C-terminus: Aromatic amino acid aminotransferase (359 aa).

Positions 1–12 are enriched in basic and acidic residues; that stretch reads MSETSPKLRAEL. A disordered region spans residues 1-21; sequence MSETSPKLRAELEGIPTYKPG. Lys223 carries the post-translational modification N6-(pyridoxal phosphate)lysine.

It belongs to the class-II pyridoxal-phosphate-dependent aminotransferase family. Homodimer. Requires pyridoxal 5'-phosphate as cofactor.

The enzyme catalyses an aromatic L-alpha-amino acid + 2-oxoglutarate = an aromatic oxo-acid + L-glutamate. Functionally, aminotransferase that catalyzes the conversion of aromatic amino acids and 2-oxoglutarate into corresponding aromatic oxo acids and L-glutamate. In Streptomyces coelicolor (strain ATCC BAA-471 / A3(2) / M145), this protein is Aromatic amino acid aminotransferase.